We begin with the raw amino-acid sequence, 764 residues long: Zinc finger CCCH domain-containing protein 24 (764 aa).

2 ANK repeats span residues 108 to 138 (EHRTPLMVAATYGSLAVLRLLLSLPSVDVNR) and 143 to 175 (DGTTALHCAASGGSPSCVEAVKLLLAAGADADA). The segment at 321–348 (HYSCVPCPDFRKGVCRRGDMCEYAHGVF) adopts a C3H1-type zinc-finger fold. Disordered stretches follow at residues 616–665 (QREK…DWGV) and 698–732 (KESPPEKQVTTAESINSVGPSPLMPPSVSNGEGPS). The segment covering 640-659 (SGVVGSPLSSSWSKWGSPSG) has biased composition (low complexity). Positions 705 to 716 (QVTTAESINSVG) are enriched in polar residues.

The protein is Zinc finger CCCH domain-containing protein 24 of Oryza sativa subsp. japonica (Rice).